The following is a 327-amino-acid chain: Small ribosomal subunit protein uS4m (327 aa).

Residues 96–154 (SRLDMSIHRALFASSALQARQLVLHGKVHVNGKPERRAYRQLLPGDLVTVDQKSVMNCV) enclose the S4 RNA-binding domain. The span at 156-173 (ASSNNTPSIQDGKQTEQV) shows a compositional bias: polar residues. The interval 156-199 (ASSNNTPSIQDGKQTEQVSSKDGENEKKKDNDDDLFEQTSNGKL) is disordered. A compositionally biased stretch (basic and acidic residues) spans 174–186 (SSKDGENEKKKDN).

This sequence belongs to the universal ribosomal protein uS4 family. Component of the mitochondrial small ribosomal subunit (mt-SSU). Mature yeast 74S mitochondrial ribosomes consist of a small (37S) and a large (54S) subunit. The 37S small subunit contains a 15S ribosomal RNA (15S mt-rRNA) and at least 32 different proteins. The 54S large subunit contains a 21S rRNA (21S mt-rRNA) and at least 45 different proteins. uS3m, uS4m and uS5m form the narrow entry site of the mRNA channel.

It localises to the mitochondrion. Component of the mitochondrial ribosome (mitoribosome), a dedicated translation machinery responsible for the synthesis of mitochondrial genome-encoded proteins, including at least some of the essential transmembrane subunits of the mitochondrial respiratory chain. The mitoribosomes are attached to the mitochondrial inner membrane and translation products are cotranslationally integrated into the membrane. The sequence is that of Small ribosomal subunit protein uS4m (nam9) from Schizosaccharomyces pombe (strain 972 / ATCC 24843) (Fission yeast).